The sequence spans 622 residues: Chaperone protein HscA homolog (622 aa).

Belongs to the heat shock protein 70 family.

In terms of biological role, chaperone involved in the maturation of iron-sulfur cluster-containing proteins. Has a low intrinsic ATPase activity which is markedly stimulated by HscB. The polypeptide is Chaperone protein HscA homolog (Methylobacillus flagellatus (strain ATCC 51484 / DSM 6875 / VKM B-1610 / KT)).